We begin with the raw amino-acid sequence, 196 residues long: Beta-crystallin A4 (196 aa).

Threonine 2 is modified (N-acetylthreonine). The segment at 2-11 is N-terminal arm; that stretch reads TLQCTKSAGH. Beta/gamma crystallin 'Greek key' domains follow at residues 12–51 and 52–98; these read WRVV…KVLS and GAWV…RPVA. Positions 99 to 104 are connecting peptide; the sequence is CANHRD. 2 consecutive Beta/gamma crystallin 'Greek key' domains span residues 105–146 and 147–195; these read SRLT…HVQS and GAWV…RRIQ.

In terms of assembly, homo/heterodimer, or complexes of higher-order. The structure of beta-crystallin oligomers seems to be stabilized through interactions between the N-terminal arms.

In terms of biological role, crystallins are the dominant structural components of the vertebrate eye lens. The chain is Beta-crystallin A4 (Cryba4) from Rattus norvegicus (Rat).